A 185-amino-acid polypeptide reads, in one-letter code: Large ribosomal subunit protein uL5 (185 aa).

The protein belongs to the universal ribosomal protein uL5 family. Part of the 50S ribosomal subunit; part of the 5S rRNA/L5/L18/L25 subcomplex. Contacts the 5S rRNA and the P site tRNA. Forms a bridge to the 30S subunit in the 70S ribosome.

Functionally, this is one of the proteins that bind and probably mediate the attachment of the 5S RNA into the large ribosomal subunit, where it forms part of the central protuberance. In the 70S ribosome it contacts protein S13 of the 30S subunit (bridge B1b), connecting the 2 subunits; this bridge is implicated in subunit movement. Contacts the P site tRNA; the 5S rRNA and some of its associated proteins might help stabilize positioning of ribosome-bound tRNAs. This chain is Large ribosomal subunit protein uL5, found in Bacteroides fragilis (strain ATCC 25285 / DSM 2151 / CCUG 4856 / JCM 11019 / LMG 10263 / NCTC 9343 / Onslow / VPI 2553 / EN-2).